The primary structure comprises 379 residues: Chaperone protein DnaJ (379 aa).

The region spanning 5–69 (EFYDRLGVSK…QKRAAYDQYG (65 aa)) is the J domain. The CR-type zinc-finger motif lies at 135-217 (GAEKEVSYNR…CHGTGHEKKT (83 aa)). Residues Cys148, Cys151, Cys165, Cys168, Cys191, Cys194, Cys205, and Cys208 each coordinate Zn(2+). CXXCXGXG motif repeat units follow at residues 148–155 (CHTCSGSG), 165–172 (CQKCHGSG), 191–198 (CDVCQGSG), and 205–212 (CPTCHGTG).

The protein belongs to the DnaJ family. As to quaternary structure, homodimer. It depends on Zn(2+) as a cofactor.

It is found in the cytoplasm. Functionally, participates actively in the response to hyperosmotic and heat shock by preventing the aggregation of stress-denatured proteins and by disaggregating proteins, also in an autonomous, DnaK-independent fashion. Unfolded proteins bind initially to DnaJ; upon interaction with the DnaJ-bound protein, DnaK hydrolyzes its bound ATP, resulting in the formation of a stable complex. GrpE releases ADP from DnaK; ATP binding to DnaK triggers the release of the substrate protein, thus completing the reaction cycle. Several rounds of ATP-dependent interactions between DnaJ, DnaK and GrpE are required for fully efficient folding. Also involved, together with DnaK and GrpE, in the DNA replication of plasmids through activation of initiation proteins. The protein is Chaperone protein DnaJ of Streptococcus agalactiae serotype III (strain NEM316).